A 324-amino-acid polypeptide reads, in one-letter code: Beta-ketoacyl-[acyl-carrier-protein] synthase III (324 aa).

Active-site residues include Cys-112 and His-249. The interval 250–254 (QANRR) is ACP-binding. The active site involves Asn-279.

The protein belongs to the thiolase-like superfamily. FabH family. Homodimer.

Its subcellular location is the cytoplasm. It carries out the reaction malonyl-[ACP] + acetyl-CoA + H(+) = 3-oxobutanoyl-[ACP] + CO2 + CoA. It functions in the pathway lipid metabolism; fatty acid biosynthesis. Functionally, catalyzes the condensation reaction of fatty acid synthesis by the addition to an acyl acceptor of two carbons from malonyl-ACP. Catalyzes the first condensation reaction which initiates fatty acid synthesis and may therefore play a role in governing the total rate of fatty acid production. Possesses both acetoacetyl-ACP synthase and acetyl transacylase activities. Its substrate specificity determines the biosynthesis of branched-chain and/or straight-chain of fatty acids. This is Beta-ketoacyl-[acyl-carrier-protein] synthase III from Streptococcus equi subsp. zooepidemicus (strain MGCS10565).